The chain runs to 2038 residues: HEAT repeat-containing protein 5A (2038 aa).

HEAT repeat units follow at residues 850-887 (EVRR…VADD) and 1082-1119 (LLRR…AAAD). The segment at 1646–1668 (RSAEVDDGASEKETLPEFGEGKD) is disordered. S1647 is modified (phosphoserine).

The protein belongs to the HEATR5 family.

The polypeptide is HEAT repeat-containing protein 5A (Heatr5a) (Mus musculus (Mouse)).